Reading from the N-terminus, the 123-residue chain is Proteasome assembly chaperone 4 (123 aa).

The protein belongs to the PSMG4 family. In terms of assembly, interacts with PSMG3. Associates with alpha subunits of the 20S proteasome.

Its function is as follows. Chaperone protein which promotes assembly of the 20S proteasome. This Mus musculus (Mouse) protein is Proteasome assembly chaperone 4 (Psmg4).